Reading from the N-terminus, the 315-residue chain is Methionyl-tRNA formyltransferase (315 aa).

113 to 116 (SLLP) is a binding site for (6S)-5,6,7,8-tetrahydrofolate.

This sequence belongs to the Fmt family.

It catalyses the reaction L-methionyl-tRNA(fMet) + (6R)-10-formyltetrahydrofolate = N-formyl-L-methionyl-tRNA(fMet) + (6S)-5,6,7,8-tetrahydrofolate + H(+). Its function is as follows. Attaches a formyl group to the free amino group of methionyl-tRNA(fMet). The formyl group appears to play a dual role in the initiator identity of N-formylmethionyl-tRNA by promoting its recognition by IF2 and preventing the misappropriation of this tRNA by the elongation apparatus. The chain is Methionyl-tRNA formyltransferase from Escherichia coli O139:H28 (strain E24377A / ETEC).